The sequence spans 92 residues: 10 kDa late embryogenesis abundant protein (92 aa).

Over residues 1–10 (MASQQGQQTR) the composition is skewed to polar residues. The tract at residues 1–92 (MASQQGQQTR…GEREEEEEED (92 aa)) is disordered. Composition is skewed to basic and acidic residues over residues 11–26 (KIPE…RAAK) and 38–71 (KSLE…EMGK).

It belongs to the small hydrophilic plant seed protein family. In terms of tissue distribution, maximally expressed in dry seeds. Also present in mid-maturation embryos.

In terms of biological role, LEA proteins are late embryonic proteins abundant in higher plant seed embryos. They may play an essential role in seed survival and in controlling water exchanges during seed desiccation and imbibition. This chain is 10 kDa late embryogenesis abundant protein, found in Helianthus annuus (Common sunflower).